The primary structure comprises 508 residues: Photosystem II CP47 reaction center protein (508 aa).

Helical transmembrane passes span 21–36 (SVHI…WAGS), 101–115 (IMLS…IWHW), 140–156 (GIHL…FGAF), 203–218 (IAAG…FHLS), 237–252 (VLSS…AFVV), and 457–472 (SFAL…HGAR).

Belongs to the PsbB/PsbC family. PsbB subfamily. In terms of assembly, PSII is composed of 1 copy each of membrane proteins PsbA, PsbB, PsbC, PsbD, PsbE, PsbF, PsbH, PsbI, PsbJ, PsbK, PsbL, PsbM, PsbT, PsbX, PsbY, PsbZ, Psb30/Ycf12, at least 3 peripheral proteins of the oxygen-evolving complex and a large number of cofactors. It forms dimeric complexes. Binds multiple chlorophylls. PSII binds additional chlorophylls, carotenoids and specific lipids. is required as a cofactor.

The protein localises to the plastid. It is found in the chloroplast thylakoid membrane. Its function is as follows. One of the components of the core complex of photosystem II (PSII). It binds chlorophyll and helps catalyze the primary light-induced photochemical processes of PSII. PSII is a light-driven water:plastoquinone oxidoreductase, using light energy to abstract electrons from H(2)O, generating O(2) and a proton gradient subsequently used for ATP formation. The sequence is that of Photosystem II CP47 reaction center protein from Piper cenocladum (Ant piper).